The chain runs to 508 residues: MSIDRLAAFLADARQFRTIPIMRKFLADVIEPLQVFANLREEAVFLLESKDDESPWARYSFIGVAPFLTLESETGETFLIKDENGNVQMTASTLKEAFQAVERALCVKPLAEAAPFTGGAVGFLGYDFISAIEKVPRHRAPDLAMKAGHFVFCESLFAFDHEKRELSLIHYIRLKGHETMQEKIAIYRAAEERIAALAAKASRPRAEQPLLPAEDEAERAALFSKASSNYEKEQFLRDVEAVKQYIAAGDVFQAVLSQRFSVPVQAGGFAIYRILRHINPSPYMFYFRLDGIEIVGSSPEKLIQVRNRRAEIDPIAGTRRRGRSPAEDEKLADELYHDPKERAEHYMLVDLARNDIGRVAKYGTVEVPVLMEIGKFSHVMHLISKVVGVLDDDIHPIDALLAAFPAGTVSGAPKVRAMQILQELEPTARGLYAGAIAYIGFDGSIDSCIAIRTAVIKDGYAYVQAGAGIVADSVPELEWKETRNKASALIYAIEQAERLFAKGEQIVC.

Residues serine 49 and 282-284 (PYM) each bind L-tryptophan. 317 to 318 (GT) serves as a coordination point for chorismate. A Mg(2+)-binding site is contributed by glutamate 344. Residues tyrosine 432, arginine 452, 466-468 (GAG), and glycine 468 each bind chorismate. Residue glutamate 481 coordinates Mg(2+).

This sequence belongs to the anthranilate synthase component I family. Heterotetramer consisting of two non-identical subunits: a beta subunit (TrpG) and a large alpha subunit (TrpE). Mg(2+) serves as cofactor.

The enzyme catalyses chorismate + L-glutamine = anthranilate + pyruvate + L-glutamate + H(+). It participates in amino-acid biosynthesis; L-tryptophan biosynthesis; L-tryptophan from chorismate: step 1/5. Its activity is regulated as follows. Feedback inhibited by tryptophan. In terms of biological role, part of a heterotetrameric complex that catalyzes the two-step biosynthesis of anthranilate, an intermediate in the biosynthesis of L-tryptophan. In the first step, the glutamine-binding beta subunit (TrpG) of anthranilate synthase (AS) provides the glutamine amidotransferase activity which generates ammonia as a substrate that, along with chorismate, is used in the second step, catalyzed by the large alpha subunit of AS (TrpE) to produce anthranilate. In the absence of TrpG, TrpE can synthesize anthranilate directly from chorismate and high concentrations of ammonia. The polypeptide is Anthranilate synthase component 1 (trpE) (Geobacillus stearothermophilus (Bacillus stearothermophilus)).